Consider the following 132-residue polypeptide: Ubiquinol-cytochrome c reductase complex assembly factor 4 (132 aa).

A signal peptide spans 1-15; that stretch reads MNRVLCAPAAGAVRA. Residues 16–78 lie on the Mitochondrial matrix side of the membrane; sequence LRLIGWASRS…GKGHQRPWWK (63 aa). Positions 29-72 are disordered; the sequence is LPGSRDRAHPAAEEEDDPDRPIEFSSSKANPHRWSVGHTMGKGH. Residues 79–95 form a helical membrane-spanning segment; the sequence is VLPLSCFLVALIIWCYL. At 96–132 the chain is on the mitochondrial intermembrane side; sequence REESEADQWLRQVWGEVPEPSDRSEEPETPAAYRART. The segment at 110–132 is disordered; sequence GEVPEPSDRSEEPETPAAYRART.

It belongs to the UQCC4 family. In terms of assembly, forms a complex, named COMB/coordinator of mitochondrial CYTB biogenesis, composed of UQCC1, UQCC2, UQCC4, UQCC5 and UQCC6; stabilizes nascent cytochrome b/MT-CYB and promotes its membrane insertion. Forms a complex, named COMA, composed of UQCC1, UQCC2 and UQCC4; activates MT-CYB translation. Forms a complex, named COMC, composed of UQCC1, UQCC2; UQCC3 and UQCC4; mediates MT-CYB hemylation and association with the first nuclear-encoded complex III subunit UQCRQ. Complexes COMA and COMB are bound to the mitochondrion inner membrane by UQCC4.

The protein localises to the mitochondrion inner membrane. Its function is as follows. Required for the assembly and stability of the mitochondrial ubiquinol-cytochrome c reductase complex (complex III (CIII) or cytochrome b-c1 complex), a multisubunit transmembrane complex that is part of the mitochondrial electron transport chain (ETC) which drives oxidative phosphorylation. This chain is Ubiquinol-cytochrome c reductase complex assembly factor 4, found in Homo sapiens (Human).